A 1425-amino-acid chain; its full sequence is Zinc finger FYVE domain-containing protein 9 (1425 aa).

Disordered stretches follow at residues 201–255 (ESTE…IGRD) and 291–352 (EDLT…SGRN). Residues 202 to 225 (STEKDMNSEKQMDPLNRPKTEGRS) show a composition bias toward basic and acidic residues. Polar residues-rich tracts occupy residues 230–245 (CPTS…SPSQ) and 296–312 (KISS…SFSH). Phosphoserine occurs at positions 306 and 668. An FYVE-type zinc finger spans residues 699–758 (DSQAPNCMKCEARFTFTKRRHHCRACGKVFCASCCSLKCKLLYMDRKEARVCVICHSVLM). Residues Cys-705, Cys-708, Cys-721, Cys-724, Cys-729, Cys-732, Cys-750, and Cys-753 each coordinate Zn(2+). Positions 767–823 (MSASSQSPNPNNPAEYCSTIPPLQQAQASGALSSPPPTVMVPVGVLKHPGAEVAQPR) are SBD.

As to quaternary structure, interacts (via the SBD region) with SMAD2; the interaction recruits SMAD2 to the TGF-beta receptor and is disrupted by phosphorylation of SMAD2 upon TGF-beta receptor activation. Interacts with SMAD3. Interacts with TGFBR1 and TGFBR2; the interaction recruits SMAD2 to the TGF-beta receptor. Interacts with PML. In terms of tissue distribution, ubiquitous. In the brain found primarily in the cerebrovascular smooth muscle cells and reactive astrocytes.

It is found in the cytoplasm. The protein resides in the early endosome membrane. Functionally, early endosomal protein that functions to recruit SMAD2/SMAD3 to intracellular membranes and to the TGF-beta receptor. Plays a significant role in TGF-mediated signaling by regulating the subcellular location of SMAD2 and SMAD3 and modulating the transcriptional activity of the SMAD3/SMAD4 complex. Possibly associated with TGF-beta receptor internalization. This Homo sapiens (Human) protein is Zinc finger FYVE domain-containing protein 9 (ZFYVE9).